The primary structure comprises 358 residues: DnaJ homolog subfamily B member 11 (358 aa).

The N-terminal stretch at 1–22 (MAPQNLGTLCLLLLYLLGAAIA) is a signal peptide. In terms of domain architecture, J spans 25–90 (DFYKILGVPR…EKRKQYDTYG (66 aa)). Residue Thr-188 is modified to Phosphothreonine. Asn-261 is a glycosylation site (N-linked (GlcNAc...) asparagine).

In terms of assembly, part of a large chaperone multiprotein complex comprising DNAJB11, HSP90B1, HSPA5, HYOU, PDIA2, PDIA4, PDIA6, PPIB, SDF2L1, UGGT1 and very small amounts of ERP29, but not, or at very low levels, CALR nor CANX. Binds to denatured substrates in an ATP-independent manner. Interacts via the J domain with HSPA5 in an ATP-dependent manner. In terms of processing, contains high-mannose Endo H-sensitive carbohydrates. Cys-169, Cys-171, Cys-193 and Cys-196 form intramolecular disulfide bonds. The preferential partner for each Cys is not known. In terms of tissue distribution, pancreas.

It is found in the endoplasmic reticulum lumen. Functionally, as a co-chaperone for HSPA5 it is required for proper folding, trafficking or degradation of proteins. Binds directly to both unfolded proteins that are substrates for ERAD and nascent unfolded peptide chains, but dissociates from the HSPA5-unfolded protein complex before folding is completed. May help recruiting HSPA5 and other chaperones to the substrate. Stimulates HSPA5 ATPase activity. It is necessary for maturation and correct trafficking of PKD1. The protein is DnaJ homolog subfamily B member 11 (DNAJB11) of Canis lupus familiaris (Dog).